Here is a 391-residue protein sequence, read N- to C-terminus: Tryptophan synthase beta chain (391 aa).

K84 carries the post-translational modification N6-(pyridoxal phosphate)lysine.

It belongs to the TrpB family. Tetramer of two alpha and two beta chains. It depends on pyridoxal 5'-phosphate as a cofactor.

The enzyme catalyses (1S,2R)-1-C-(indol-3-yl)glycerol 3-phosphate + L-serine = D-glyceraldehyde 3-phosphate + L-tryptophan + H2O. Its pathway is amino-acid biosynthesis; L-tryptophan biosynthesis; L-tryptophan from chorismate: step 5/5. Its function is as follows. The beta subunit is responsible for the synthesis of L-tryptophan from indole and L-serine. The polypeptide is Tryptophan synthase beta chain (Thermoanaerobacter pseudethanolicus (strain ATCC 33223 / 39E) (Clostridium thermohydrosulfuricum)).